The following is a 460-amino-acid chain: Nitrogenase iron-iron protein beta chain (460 aa).

[8Fe-7S] cluster is bound by residues Cys-20, Cys-45, Cys-104, and Ser-143.

Belongs to the NifD/NifK/NifE/NifN family. As to quaternary structure, hexamer of two alpha, two beta, and two delta chains. Requires [8Fe-7S] cluster as cofactor.

The catalysed reaction is N2 + 8 reduced [2Fe-2S]-[ferredoxin] + 16 ATP + 16 H2O = H2 + 8 oxidized [2Fe-2S]-[ferredoxin] + 2 NH4(+) + 16 ADP + 16 phosphate + 6 H(+). This iron-iron protein is part of the nitrogenase complex that catalyzes the key enzymatic reactions in nitrogen fixation. Other nitrogenase complexes utilize a molybdenum-iron protein or a vanadium-iron protein. The protein is Nitrogenase iron-iron protein beta chain (anfK) of Rhodobacter capsulatus (Rhodopseudomonas capsulata).